Consider the following 308-residue polypeptide: 2-methylisocitrate lyase (308 aa).

Position 51-53 (51-53 (SGA)) interacts with substrate. Mg(2+) contacts are provided by Asp-90 and Asp-92. Residues 127–128 (CG), Arg-160, Glu-190, 212–214 (NMT), Arg-243, and Arg-272 each bind substrate.

This sequence belongs to the isocitrate lyase/PEP mutase superfamily. Methylisocitrate lyase family. Homotetramer; dimer of dimers. Requires Mg(2+) as cofactor.

It catalyses the reaction (2S,3R)-3-hydroxybutane-1,2,3-tricarboxylate = pyruvate + succinate. It functions in the pathway organic acid metabolism; propanoate degradation. In terms of biological role, involved in the catabolism of short chain fatty acids (SCFA) via the 2-methylcitrate cycle I (propionate degradation route). Catalyzes the thermodynamically favored C-C bond cleavage of (2R,3S)-2-methylisocitrate to yield pyruvate and succinate via an alpha-carboxy-carbanion intermediate. The sequence is that of 2-methylisocitrate lyase from Aeropyrum pernix (strain ATCC 700893 / DSM 11879 / JCM 9820 / NBRC 100138 / K1).